Consider the following 199-residue polypeptide: Recombination protein RecR (199 aa).

A C4-type zinc finger spans residues 56–71; sequence CSICFNWSAEDPCEIC. The region spanning 79–174 is the Toprim domain; the sequence is STWCVVADVK…GLRMTRLAFG (96 aa).

It belongs to the RecR family.

In terms of biological role, may play a role in DNA repair. It seems to be involved in an RecBC-independent recombinational process of DNA repair. It may act with RecF and RecO. The polypeptide is Recombination protein RecR (Synechococcus sp. (strain JA-3-3Ab) (Cyanobacteria bacterium Yellowstone A-Prime)).